The following is a 308-amino-acid chain: Ribosomal RNA large subunit methyltransferase F (308 aa).

Positions 190 to 212 (DSAASARAGSERKRRNLGQDKND) are disordered.

Belongs to the methyltransferase superfamily. METTL16/RlmF family.

It is found in the cytoplasm. It carries out the reaction adenosine(1618) in 23S rRNA + S-adenosyl-L-methionine = N(6)-methyladenosine(1618) in 23S rRNA + S-adenosyl-L-homocysteine + H(+). Specifically methylates the adenine in position 1618 of 23S rRNA. This chain is Ribosomal RNA large subunit methyltransferase F, found in Citrobacter koseri (strain ATCC BAA-895 / CDC 4225-83 / SGSC4696).